The chain runs to 307 residues: Oxygen-dependent coproporphyrinogen-III oxidase (307 aa).

Substrate is bound at residue serine 99. The a divalent metal cation site is built by histidine 103 and histidine 113. The Proton donor role is filled by histidine 113. Position 115–117 (115–117 (NVR)) interacts with substrate. Positions 152 and 182 each coordinate a divalent metal cation. The interval 247–282 (YVEFNLVFDRGTLFGLQSGGRTESILMSMPPVVNWR) is important for dimerization. A substrate-binding site is contributed by 265 to 267 (GGR).

It belongs to the aerobic coproporphyrinogen-III oxidase family. Homodimer. Requires a divalent metal cation as cofactor.

The protein resides in the cytoplasm. It catalyses the reaction coproporphyrinogen III + O2 + 2 H(+) = protoporphyrinogen IX + 2 CO2 + 2 H2O. The protein operates within porphyrin-containing compound metabolism; protoporphyrin-IX biosynthesis; protoporphyrinogen-IX from coproporphyrinogen-III (O2 route): step 1/1. Involved in the heme biosynthesis. Catalyzes the aerobic oxidative decarboxylation of propionate groups of rings A and B of coproporphyrinogen-III to yield the vinyl groups in protoporphyrinogen-IX. The protein is Oxygen-dependent coproporphyrinogen-III oxidase of Paraburkholderia phytofirmans (strain DSM 17436 / LMG 22146 / PsJN) (Burkholderia phytofirmans).